A 185-amino-acid chain; its full sequence is Ribosome-recycling factor (185 aa).

Belongs to the RRF family.

Its subcellular location is the cytoplasm. Its function is as follows. Responsible for the release of ribosomes from messenger RNA at the termination of protein biosynthesis. May increase the efficiency of translation by recycling ribosomes from one round of translation to another. The chain is Ribosome-recycling factor from Salmonella arizonae (strain ATCC BAA-731 / CDC346-86 / RSK2980).